Reading from the N-terminus, the 105-residue chain is Endogenous retrovirus group K member 8 Rec protein (105 aa).

The interval 1-48 (MNPSEMQRKAPPRRRRHRNRAPLTHKMNKMVTSEEQMKLPSTKKAEPP) is disordered. Basic residues predominate over residues 10 to 20 (APPRRRRHRNR). The short motif at 13–20 (RRRRHRNR) is the Nuclear localization signal element. Positions 50–59 (WAQLKKLTQL) match the Nuclear export signal motif.

As to quaternary structure, forms homodimers, homotrimers, and homotetramers via a C-terminal domain. Associates with XPO1 and with ZNF145.

Its subcellular location is the cytoplasm. It localises to the nucleus. It is found in the nucleolus. Its function is as follows. Retroviral replication requires the nuclear export and translation of unspliced, singly-spliced and multiply-spliced derivatives of the initial genomic transcript. Rec interacts with a highly structured RNA element (RcRE) present in the viral 3'LTR and recruits the cellular nuclear export machinery. This permits export to the cytoplasm of unspliced genomic or incompletely spliced subgenomic viral transcripts. This Homo sapiens (Human) protein is Endogenous retrovirus group K member 8 Rec protein (ERVK-8).